Reading from the N-terminus, the 382-residue chain is Ribosomal RNA large subunit methyltransferase G (382 aa).

It belongs to the methyltransferase superfamily. RlmG family.

The protein localises to the cytoplasm. The enzyme catalyses guanosine(1835) in 23S rRNA + S-adenosyl-L-methionine = N(2)-methylguanosine(1835) in 23S rRNA + S-adenosyl-L-homocysteine + H(+). Specifically methylates the guanine in position 1835 (m2G1835) of 23S rRNA. The chain is Ribosomal RNA large subunit methyltransferase G from Pseudoalteromonas translucida (strain TAC 125).